A 493-amino-acid polypeptide reads, in one-letter code: Glutamate--tRNA ligase (493 aa).

The 'HIGH' region motif lies at 10–20; it reads PSPTGTPHVGL. Positions 254 to 258 match the 'KMSKS' region motif; it reads KLSKR. Lysine 257 provides a ligand contact to ATP.

The protein belongs to the class-I aminoacyl-tRNA synthetase family. Glutamate--tRNA ligase type 1 subfamily. In terms of assembly, monomer.

The protein localises to the cytoplasm. It catalyses the reaction tRNA(Glu) + L-glutamate + ATP = L-glutamyl-tRNA(Glu) + AMP + diphosphate. Functionally, catalyzes the attachment of glutamate to tRNA(Glu) in a two-step reaction: glutamate is first activated by ATP to form Glu-AMP and then transferred to the acceptor end of tRNA(Glu). The sequence is that of Glutamate--tRNA ligase from Corynebacterium efficiens (strain DSM 44549 / YS-314 / AJ 12310 / JCM 11189 / NBRC 100395).